Consider the following 389-residue polypeptide: S-adenosylmethionine synthase (389 aa).

Histidine 17 lines the ATP pocket. Aspartate 19 contributes to the Mg(2+) binding site. Glutamate 45 lines the K(+) pocket. Residues glutamate 58 and glutamine 101 each contribute to the L-methionine site. Residues 101 to 111 (QSPDISQGVTE) form a flexible loop region. ATP contacts are provided by residues 168 to 170 (DSK), 234 to 235 (RF), aspartate 243, 249 to 250 (RK), alanine 266, and lysine 270. L-methionine is bound at residue aspartate 243. Lysine 274 is an L-methionine binding site.

It belongs to the AdoMet synthase family. As to quaternary structure, homotetramer; dimer of dimers. Requires Mg(2+) as cofactor. It depends on K(+) as a cofactor.

Its subcellular location is the cytoplasm. It carries out the reaction L-methionine + ATP + H2O = S-adenosyl-L-methionine + phosphate + diphosphate. It participates in amino-acid biosynthesis; S-adenosyl-L-methionine biosynthesis; S-adenosyl-L-methionine from L-methionine: step 1/1. Its function is as follows. Catalyzes the formation of S-adenosylmethionine (AdoMet) from methionine and ATP. The overall synthetic reaction is composed of two sequential steps, AdoMet formation and the subsequent tripolyphosphate hydrolysis which occurs prior to release of AdoMet from the enzyme. This chain is S-adenosylmethionine synthase, found in Geobacter sulfurreducens (strain ATCC 51573 / DSM 12127 / PCA).